The chain runs to 286 residues: Bifunctional protein FolD (286 aa).

Residues 165–167 (GRS), Ser-190, and Val-231 contribute to the NADP(+) site.

It belongs to the tetrahydrofolate dehydrogenase/cyclohydrolase family. As to quaternary structure, homodimer.

It carries out the reaction (6R)-5,10-methylene-5,6,7,8-tetrahydrofolate + NADP(+) = (6R)-5,10-methenyltetrahydrofolate + NADPH. It catalyses the reaction (6R)-5,10-methenyltetrahydrofolate + H2O = (6R)-10-formyltetrahydrofolate + H(+). Its pathway is one-carbon metabolism; tetrahydrofolate interconversion. Its function is as follows. Catalyzes the oxidation of 5,10-methylenetetrahydrofolate to 5,10-methenyltetrahydrofolate and then the hydrolysis of 5,10-methenyltetrahydrofolate to 10-formyltetrahydrofolate. This chain is Bifunctional protein FolD, found in Bacillus thuringiensis (strain Al Hakam).